Reading from the N-terminus, the 201-residue chain is MYTLLSGLYKYMFQKDEYCVLILGLDNAGKTTFLEQSKTRFNKNYKGMSLSKITTTVGLNIGTVDVGKARLMFWDLGGQEELQSLWDKYYAECHGVIYVIDSTDEERLSESKQAFEKMVTSEALDGVPILVLANKQDVETCLSIPDIKTAFSDCASKIGRRDCLTQACSALTGKGVREGIEWMVKCVVRNVHRPPRQRDIT.

N-acetylmethionine is present on methionine 1. Residues 24–31, 75–79, and 134–137 each bind GTP; these read GLDNAGKT, DLGGQ, and NKQD.

This sequence belongs to the small GTPase superfamily. Arf family. Interacts with SYS1.

Its subcellular location is the golgi apparatus. The protein localises to the trans-Golgi network. In terms of biological role, trans-Golgi-associated GTPase that regulates protein sorting. Controls the targeting of ARL1 and its effector to the trans-Golgi. Required for the lipidation of chylomicrons in the intestine and required for VLDL lipidation in the liver. In Bos taurus (Bovine), this protein is ADP-ribosylation factor-related protein 1 (ARFRP1).